Here is a 406-residue protein sequence, read N- to C-terminus: MSGCPYFQRKFLSTSKQHLKEEENDEAQTGINKASKGGLIYGDYLQLDKIVTSQVLQSELKGNKIHDEHLFIVTHQAYELWFKQVLWELDSVREIFISGHVRDERNMLKVNTRIHRIVMIFRLLLDQFAVLETMTALDFYDFREYLSPASGFQSLQFRLLENKIGVPHNQRVPYNRRHYRDNFRDQESELLLHSEQEPTLLQLVEQWLERTPGLEEDGFNFWGKLEKNIFEGLRREKEHIEQKPASERKEEMLAELIKQRDIFLSLFDEKRHDHLVSTGQRRLSYKALQGALMIYFYREEPRFQVPFQLLTSLMDIDTLMTKWRYNHVCMVHRMIGSKDGTGGSSGYQYLRSTVSDRYKVFVDLFNLATFLIPRDWVPKLDPSEHTFLYMAECCDSSYCSSSDDSD.

Residues 71–75 (FIVTH) and R143 each bind substrate. H327 is a binding site for heme. Residue T341 participates in substrate binding.

It belongs to the tryptophan 2,3-dioxygenase family. Homotetramer. Dimer of dimers. The cofactor is heme.

The catalysed reaction is L-tryptophan + O2 = N-formyl-L-kynurenine. The protein operates within amino-acid degradation; L-tryptophan degradation via kynurenine pathway; L-kynurenine from L-tryptophan: step 1/2. Its function is as follows. Heme-dependent dioxygenase that catalyzes the oxidative cleavage of the L-tryptophan (L-Trp) pyrrole ring and converts L-tryptophan to N-formyl-L-kynurenine. Catalyzes the oxidative cleavage of the indole moiety. The chain is Tryptophan 2,3-dioxygenase A from Danio rerio (Zebrafish).